A 316-amino-acid chain; its full sequence is Triplex capsid protein 2 (316 aa).

It belongs to the herpesviridae TRX2 protein family. Interacts with TRX1 and major capisd protein/MCP.

It is found in the virion. The protein localises to the host nucleus. Structural component of the T=16 icosahedral capsid. The capsid is composed of pentamers and hexamers of major capsid protein/MCP, which are linked together by heterotrimers called triplexes. These triplexes are formed by a single molecule of triplex protein 1/TRX1 and two copies of triplex protein 2/TRX2. Additionally, TRX1 is required for efficient transport of TRX2 to the nucleus, which is the site of capsid assembly. In Homo sapiens (Human), this protein is Triplex capsid protein 2.